The following is a 180-amino-acid chain: Large ribosomal subunit protein uL5c (180 aa).

Belongs to the universal ribosomal protein uL5 family. Part of the 50S ribosomal subunit; contacts the 5S rRNA.

It localises to the plastid. The protein resides in the chloroplast. Functionally, binds 5S rRNA, forms part of the central protuberance of the 50S subunit. This is Large ribosomal subunit protein uL5c (rpl5) from Tetradesmus obliquus (Green alga).